A 287-amino-acid polypeptide reads, in one-letter code: Myoblast determination protein 1 homolog B (287 aa).

In terms of domain architecture, bHLH spans Asp-96–Leu-147. Disordered regions lie at residues Asn-161 to Asp-202 and Gln-231 to His-277. A compositionally biased stretch (low complexity) spans Asp-168–Ser-188. Positions Ser-267–His-277 are enriched in polar residues.

Efficient DNA binding requires dimerization with another bHLH protein.

The protein localises to the nucleus. May act as a transcriptional activator that promotes transcription of muscle-specific target genes and plays a role in muscle differentiation. This is Myoblast determination protein 1 homolog B (myod1-b) from Xenopus laevis (African clawed frog).